A 569-amino-acid polypeptide reads, in one-letter code: Formate--tetrahydrofolate ligase (569 aa).

68–75 serves as a coordination point for ATP; sequence TPAGEGKT.

It belongs to the formate--tetrahydrofolate ligase family.

The enzyme catalyses (6S)-5,6,7,8-tetrahydrofolate + formate + ATP = (6R)-10-formyltetrahydrofolate + ADP + phosphate. It participates in one-carbon metabolism; tetrahydrofolate interconversion. This is Formate--tetrahydrofolate ligase from Psychrobacter sp. (strain PRwf-1).